A 533-amino-acid polypeptide reads, in one-letter code: Receptor homology region, transmembrane domain- and RING domain-containing protein 1 (533 aa).

Residues 1-26 form the signal peptide; sequence MNRRRTMLLLICLCATFCLMTQLGAA. Residues 27–167 are Lumenal-facing; it reads NVVLMGTNLT…LPAFENSAWS (141 aa). N34 carries N-linked (GlcNAc...) asparagine glycosylation. Residues C68 and C91 are joined by a disulfide bond. In terms of domain architecture, PA spans 84–145; sequence ALIIRGGCTF…ISKASGEVLK (62 aa). A helical transmembrane segment spans residues 168–188; that stretch reads IMAISFISLLAMSAVLATCFF. The Cytoplasmic portion of the chain corresponds to 189–533; sequence VRRHHIRRDR…MASAQSLPGC (345 aa). Residues 236 to 278 form an RING-type; atypical zinc finger; it reads CAICLEDYNVGEKLRVLPCRHKFHAACVDLWLTTWRTFCPVCK. 2 disordered regions span residues 309–329 and 440–476; these read SFRS…PSSQ and LRRC…LAGA. Residues 448–463 show a composition bias toward polar residues; it reads PSLSTMAPQSPQQSQL.

The protein resides in the prevacuolar compartment membrane. The protein localises to the protein storage vacuole membrane. Its subcellular location is the golgi apparatus membrane. Its function is as follows. Involved in the trafficking of vacuolar proteins. Functions probably as a sorting receptor for protein trafficking to the protein storage vacuole (PSV) by binding the C-terminal vacuolar sorting determinant (VSD) of vacuolar-sorted proteins. The sequence is that of Receptor homology region, transmembrane domain- and RING domain-containing protein 1 from Oryza sativa subsp. japonica (Rice).